Consider the following 285-residue polypeptide: Small ribosomal subunit protein uS2 (285 aa).

The segment at 262 to 285 is disordered; that stretch reads NDDWNEDDTAPAAPGAASWGGAAF. The span at 271-285 shows a compositional bias: low complexity; sequence APAAPGAASWGGAAF.

It belongs to the universal ribosomal protein uS2 family. As to quaternary structure, component of the small ribosomal subunit. Mature ribosomes consist of a small (40S) and a large (60S) subunit. The 40S subunit contains about 33 different proteins and 1 molecule of RNA (18S). The 60S subunit contains about 49 different proteins and 3 molecules of RNA (28S, 5.8S and 5S). Interacts with ribosomal protein S21.

The protein localises to the cytoplasm. Its function is as follows. Required for the assembly and/or stability of the 40S ribosomal subunit. Required for the processing of the 20S rRNA-precursor to mature 18S rRNA in a late step of the maturation of 40S ribosomal subunits. The sequence is that of Small ribosomal subunit protein uS2 from Anopheles gambiae (African malaria mosquito).